The sequence spans 452 residues: Imaginal disk growth factor 6 (452 aa).

The N-terminal stretch at Met-1–Ala-18 is a signal peptide. In terms of domain architecture, GH18 spans Lys-29–Asn-452. A disulfide bridge connects residues Cys-33 and Cys-60. Asn-233 is a glycosylation site (N-linked (GlcNAc...) asparagine). Cysteines 352 and 435 form a disulfide.

Belongs to the glycosyl hydrolase 18 family. IDGF subfamily. Post-translationally, glycosylated. As to expression, in larvae, it is expressed in the fat body and by hemocytes.

It is found in the secreted. Functionally, probably required to stimulate the proliferation, polarization and motility of imaginal disk cells. May act by stabilizing the binding of insulin-like peptides to its receptor through a simultaneous interaction with both molecules to form a multiprotein signaling complex. The sequence is that of Imaginal disk growth factor 6 from Drosophila melanogaster (Fruit fly).